Consider the following 539-residue polypeptide: M protein, serotype 24 (539 aa).

The first 42 residues, 1 to 42 (MTKNNTNRHYSLRKLKTGTASVAVALTVLGAGLVVNTNEVSA), serve as a signal peptide directing secretion. Residues 118 to 152 (LEARKADLEKALEGAMNFSTADSAKIKTLEAEKAA) form an A-1 repeat. The interval 118–301 (LEARKADLEK…ALEAEKADLE (184 aa)) is 5.3 X 35 AA tandem repeats, A-type. The stretch at 153-187 (LAARKADLEKALEGAMNFSTADSAKIKTLEAEKAA) is one A-2 repeat. The A-3 repeat unit spans residues 188-222 (LEARQAELEKALEGAMNFSTADSAKIKTLEAEKAA). The stretch at 223-257 (LAARKADLEKALEGAMNFSTADSAKIKTLEAEKAA) is one A-4 repeat. One copy of the A-5 repeat lies at 258–292 (LEARQAELEKALEGAMNFSTADSAKIKTLEAEKAA). The A-6; truncated repeat unit spans residues 293–297 (LEAEK). The tract at residues 297-401 (KADLEHQSQV…REAKKQVEKA (105 aa)) is disordered. 3 C repeats span residues 298–332 (ADLE…EAEH), 333–367 (QKLE…EAEH), and 368–402 (QKLE…EKAL). Polar residues predominate over residues 303-312 (QSQVLNANRQ). Composition is skewed to basic and acidic residues over residues 314 to 340 (LRRD…EQNK), 349 to 375 (LRRD…EQNK), and 384 to 401 (LRRD…VEKA). 4 D repeats span residues 435-440 (AKLEAE), 441-446 (AKALKE), 449-454 (AKQAEE), and 456-461 (AKLRAG). The interval 456–511 (AKLRAGKASDSQTPDAKPGNKAVPGKGQAPQAGTKPNQNKAPMKETKRQLPSTGET) is disordered. The LPXTG sorting signal motif lies at 505-509 (LPSTG). Pentaglycyl murein peptidoglycan amidated threonine is present on threonine 508. A propeptide spans 509–539 (GETANPFFTAAALTVMATAGVAAVVKRKEEN) (removed by sortase).

It belongs to the M protein family.

It is found in the secreted. The protein localises to the cell wall. In terms of biological role, this protein is one of the different antigenic serotypes of protein M. Protein M is closely associated with virulence of the bacterium and can render the organism resistant to phagocytosis. This Streptococcus pyogenes protein is M protein, serotype 24 (emm24).